A 37-amino-acid chain; its full sequence is MDKFLSSAPVLLTAMMVFTAGLLIEFNRFFPDLLFHP.

A helical membrane pass occupies residues 4 to 24; it reads FLSSAPVLLTAMMVFTAGLLI.

It belongs to the PsaJ family.

The protein resides in the cellular thylakoid membrane. Its function is as follows. May help in the organization of the PsaE and PsaF subunits. This Picosynechococcus sp. (strain ATCC 27264 / PCC 7002 / PR-6) (Agmenellum quadruplicatum) protein is Photosystem I reaction center subunit IX.